The sequence spans 289 residues: uncharacterized protein (289 aa).

This is an uncharacterized protein from Dictyostelium discoideum (Social amoeba).